The primary structure comprises 104 residues: Large ribosomal subunit protein bL21 (104 aa).

The protein belongs to the bacterial ribosomal protein bL21 family. In terms of assembly, part of the 50S ribosomal subunit. Contacts protein L20.

In terms of biological role, this protein binds to 23S rRNA in the presence of protein L20. This Acidiphilium cryptum (strain JF-5) protein is Large ribosomal subunit protein bL21.